The chain runs to 350 residues: Phosphotriesterase-related protein (350 aa).

A divalent metal cation contacts are provided by histidine 22, histidine 24, glutamate 169, histidine 201, histidine 230, and aspartate 298.

It belongs to the metallo-dependent hydrolases superfamily. Phosphotriesterase family. Requires a divalent metal cation as cofactor.

This chain is Phosphotriesterase-related protein, found in Drosophila yakuba (Fruit fly).